The primary structure comprises 424 residues: Serine--tRNA ligase (424 aa).

Residue 232-234 (TAE) coordinates L-serine. Position 263 to 265 (263 to 265 (RSE)) interacts with ATP. Residue glutamate 286 participates in L-serine binding. 350–353 (EISS) provides a ligand contact to ATP. An L-serine-binding site is contributed by serine 385.

This sequence belongs to the class-II aminoacyl-tRNA synthetase family. Type-1 seryl-tRNA synthetase subfamily. In terms of assembly, homodimer. The tRNA molecule binds across the dimer.

It localises to the cytoplasm. The catalysed reaction is tRNA(Ser) + L-serine + ATP = L-seryl-tRNA(Ser) + AMP + diphosphate + H(+). It carries out the reaction tRNA(Sec) + L-serine + ATP = L-seryl-tRNA(Sec) + AMP + diphosphate + H(+). It participates in aminoacyl-tRNA biosynthesis; selenocysteinyl-tRNA(Sec) biosynthesis; L-seryl-tRNA(Sec) from L-serine and tRNA(Sec): step 1/1. Catalyzes the attachment of serine to tRNA(Ser). Is also able to aminoacylate tRNA(Sec) with serine, to form the misacylated tRNA L-seryl-tRNA(Sec), which will be further converted into selenocysteinyl-tRNA(Sec). This is Serine--tRNA ligase from Latilactobacillus sakei subsp. sakei (strain 23K) (Lactobacillus sakei subsp. sakei).